We begin with the raw amino-acid sequence, 414 residues long: Protein RecA (414 aa).

78–85 (GPESSGKT) contacts ATP. Residues 361 to 384 (QEKAVEALKKEEGSKEDALTGNKD) are compositionally biased toward basic and acidic residues. Residues 361 to 414 (QEKAVEALKKEEGSKEDALTGNKDETDDSAQKNSAASKAKRAEVVGLPADDSLF) are disordered.

Belongs to the RecA family.

Its subcellular location is the cytoplasm. Can catalyze the hydrolysis of ATP in the presence of single-stranded DNA, the ATP-dependent uptake of single-stranded DNA by duplex DNA, and the ATP-dependent hybridization of homologous single-stranded DNAs. It interacts with LexA causing its activation and leading to its autocatalytic cleavage. The polypeptide is Protein RecA (Treponema denticola (strain ATCC 35405 / DSM 14222 / CIP 103919 / JCM 8153 / KCTC 15104)).